The primary structure comprises 71 residues: Small ribosomal subunit protein bS21 (71 aa).

It belongs to the bacterial ribosomal protein bS21 family.

The polypeptide is Small ribosomal subunit protein bS21 (Alcanivorax borkumensis (strain ATCC 700651 / DSM 11573 / NCIMB 13689 / SK2)).